We begin with the raw amino-acid sequence, 205 residues long: Large ribosomal subunit protein uL4 (205 aa).

The protein belongs to the universal ribosomal protein uL4 family. As to quaternary structure, part of the 50S ribosomal subunit.

Functionally, one of the primary rRNA binding proteins, this protein initially binds near the 5'-end of the 23S rRNA. It is important during the early stages of 50S assembly. It makes multiple contacts with different domains of the 23S rRNA in the assembled 50S subunit and ribosome. Forms part of the polypeptide exit tunnel. This Thermus thermophilus (strain ATCC BAA-163 / DSM 7039 / HB27) protein is Large ribosomal subunit protein uL4.